The sequence spans 37 residues: Potassium channel toxin alpha-KTx 4.3 (37 aa).

Disulfide bonds link cysteine 7–cysteine 28, cysteine 13–cysteine 33, and cysteine 17–cysteine 35. The interaction with Ca(2+)-activated K(+) channels stretch occupies residues 26 to 33 (GKCMNGKC).

In terms of tissue distribution, expressed by the venom gland.

Its subcellular location is the secreted. Blocks reversibly Shaker B potassium-channels. This is Potassium channel toxin alpha-KTx 4.3 from Tityus discrepans (Venezuelan scorpion).